Here is a 511-residue protein sequence, read N- to C-terminus: 2,3-bisphosphoglycerate-independent phosphoglycerate mutase (511 aa).

Residue D12 coordinates Mn(2+). Y36 bears the Phosphotyrosine mark. S62 provides a ligand contact to Mn(2+). The active-site Phosphoserine intermediate is the S62. Residues H123, 153–154 (RD), R185, R191, 261–264 (RPDR), and K336 contribute to the substrate site. The Mn(2+) site is built by D403, H407, D444, H445, and H462.

This sequence belongs to the BPG-independent phosphoglycerate mutase family. As to quaternary structure, monomer. Requires Mn(2+) as cofactor.

It carries out the reaction (2R)-2-phosphoglycerate = (2R)-3-phosphoglycerate. The protein operates within carbohydrate degradation; glycolysis; pyruvate from D-glyceraldehyde 3-phosphate: step 3/5. In terms of biological role, essential for rapid growth and for sporulation. Catalyzes the interconversion of 2-phosphoglycerate and 3-phosphoglycerate. This is 2,3-bisphosphoglycerate-independent phosphoglycerate mutase from Bacillus velezensis (strain DSM 23117 / BGSC 10A6 / LMG 26770 / FZB42) (Bacillus amyloliquefaciens subsp. plantarum).